The following is a 150-amino-acid chain: Large ribosomal subunit protein uL13 (150 aa).

The segment at 129-150 (AEHPHAAQQPKPLQLDPAATAQ) is disordered.

This sequence belongs to the universal ribosomal protein uL13 family. As to quaternary structure, part of the 50S ribosomal subunit.

In terms of biological role, this protein is one of the early assembly proteins of the 50S ribosomal subunit, although it is not seen to bind rRNA by itself. It is important during the early stages of 50S assembly. The sequence is that of Large ribosomal subunit protein uL13 from Synechococcus sp. (strain WH7803).